Consider the following 103-residue polypeptide: Small ribosomal subunit protein uS10 (103 aa).

This sequence belongs to the universal ribosomal protein uS10 family. Part of the 30S ribosomal subunit.

Involved in the binding of tRNA to the ribosomes. The chain is Small ribosomal subunit protein uS10 from Acidovorax sp. (strain JS42).